A 172-amino-acid polypeptide reads, in one-letter code: Large ribosomal subunit protein uL10 (172 aa).

It belongs to the universal ribosomal protein uL10 family. Part of the ribosomal stalk of the 50S ribosomal subunit. The N-terminus interacts with L11 and the large rRNA to form the base of the stalk. The C-terminus forms an elongated spine to which L12 dimers bind in a sequential fashion forming a multimeric L10(L12)X complex.

Functionally, forms part of the ribosomal stalk, playing a central role in the interaction of the ribosome with GTP-bound translation factors. The sequence is that of Large ribosomal subunit protein uL10 from Bartonella tribocorum (strain CIP 105476 / IBS 506).